The sequence spans 92 residues: Small ribosomal subunit protein uS19c (92 aa).

This sequence belongs to the universal ribosomal protein uS19 family.

Its subcellular location is the plastid. It localises to the chloroplast. Protein S19 forms a complex with S13 that binds strongly to the 16S ribosomal RNA. In Illicium oligandrum (Star anise), this protein is Small ribosomal subunit protein uS19c.